Reading from the N-terminus, the 411-residue chain is MIQVLLVTICLAAFPYQGSSIILESGNVNDYEIVYPRKVTPVPRGAVQPKYEDAMQYELKVNGEPVVLHLEKNKGLFSEDYSETHYSPDGREITTYPLVEDHCYYHGRIENDADSTASISTCNGLKGHFKLQGEMYLIEPLELSDSEAHAVYKYENVEKEDEAPKMCGVTQNWESYEPTKKAFQLNLTPEQQGFPQRYVELVIIADHRMYMKYKRDSNKITQWVHQMVNTINEIYRPLNIQFALVGLEIWSNQDLITVTSVSDDTLISFANWRETVLLRRKSHDNAQLLTAIVFDEGIIGRAPLAGMCDPNRSVGTVQDHSKINFRVAIIMAHEIGHNLGMGHDDNSCTCGGYSCIMLPRLSKQPSKLFSDCSKKDYLTFLKVKNPQCILNKPLRTDTVSTPVSGNELLEA.

Positions Met1 to Ser20 are cleaved as a signal peptide. Residues Ile21 to Pro189 constitute a propeptide that is removed on maturation. The region spanning Arg197–Pro393 is the Peptidase M12B domain. Ca(2+) is bound by residues Glu200 and Asp284. 3 disulfides stabilise this stretch: Cys308–Cys388, Cys348–Cys372, and Cys350–Cys355. Residue Asn311 is glycosylated (N-linked (GlcNAc...) asparagine). Residue His333 coordinates Zn(2+). The active site involves Glu334. Residues His337 and His343 each contribute to the Zn(2+) site. Ca(2+) is bound by residues Cys388, Asn391, Val403, Asn406, Leu408, and Glu410.

Belongs to the venom metalloproteinase (M12B) family. P-I subfamily. As to quaternary structure, monomer. The cofactor is Zn(2+). Expressed by the venom gland.

The protein localises to the secreted. With respect to regulation, inhibited by EDTA and 1,10-phenanthroline, but not by PMSF. This venom zinc protease has fibrinolytic activity. The recombinant enzyme cleaves both alpha- (FGA) and beta-chains (FGB) of fibrinogen, but not the gamma-chain. The recombinant protein does not produce hemorrhage in mice and does not have effect on ADP- or collagen-stimulated platelet aggregation. The sequence is that of Snake venom metalloproteinase VMP1 from Agkistrodon piscivorus leucostoma (Western cottonmouth).